Here is a 135-residue protein sequence, read N- to C-terminus: uncharacterized protein (135 aa).

Positions 56–135 (VQSHNRGINN…QKGQLKIEKV (80 aa)) are disordered. Over residues 64–74 (NNRRRDQKRKQ) the composition is skewed to basic residues. Residues 77 to 89 (SIKQDNDLNVSSE) are compositionally biased toward polar residues. The span at 108–135 (YKETPDLDEPGSREKRVSQKGQLKIEKV) shows a compositional bias: basic and acidic residues.

This is an uncharacterized protein from Schizosaccharomyces pombe (strain 972 / ATCC 24843) (Fission yeast).